We begin with the raw amino-acid sequence, 193 residues long: MEVDLLHFEKKYHNCIVAGIDEAGRGPLAGPVVASAVIVDNANIITGIKDSKKLSKKKRELLYEQITSNYAWATAIISHTEIDDINILEATKKACSIAVANLSLEPEIVLVDGNMQFKDERFVSIINGDNLSLSIAAASIIAKVTRDRLMLDLSAEFPQYLWHKNSGYGTKEHIEAINIHGLSPYHRRSFRCC.

The RNase H type-2 domain occupies 15-193 (CIVAGIDEAG…PYHRRSFRCC (179 aa)). Residues aspartate 21, glutamate 22, and aspartate 112 each coordinate a divalent metal cation.

This sequence belongs to the RNase HII family. Mn(2+) is required as a cofactor. Mg(2+) serves as cofactor.

Its subcellular location is the cytoplasm. It carries out the reaction Endonucleolytic cleavage to 5'-phosphomonoester.. Endonuclease that specifically degrades the RNA of RNA-DNA hybrids. In Rickettsia rickettsii (strain Iowa), this protein is Ribonuclease HII.